The sequence spans 167 residues: SsrA-binding protein (167 aa).

The tract at residues glutamine 139–alanine 167 is disordered. A compositionally biased stretch (basic and acidic residues) spans arginine 144 to arginine 158.

It belongs to the SmpB family.

It is found in the cytoplasm. In terms of biological role, required for rescue of stalled ribosomes mediated by trans-translation. Binds to transfer-messenger RNA (tmRNA), required for stable association of tmRNA with ribosomes. tmRNA and SmpB together mimic tRNA shape, replacing the anticodon stem-loop with SmpB. tmRNA is encoded by the ssrA gene; the 2 termini fold to resemble tRNA(Ala) and it encodes a 'tag peptide', a short internal open reading frame. During trans-translation Ala-aminoacylated tmRNA acts like a tRNA, entering the A-site of stalled ribosomes, displacing the stalled mRNA. The ribosome then switches to translate the ORF on the tmRNA; the nascent peptide is terminated with the 'tag peptide' encoded by the tmRNA and targeted for degradation. The ribosome is freed to recommence translation, which seems to be the essential function of trans-translation. The polypeptide is SsrA-binding protein (Xylella fastidiosa (strain M12)).